Reading from the N-terminus, the 114-residue chain is T cell receptor beta variable 6-6 (114 aa).

The first 21 residues, 1–21, serve as a signal peptide directing secretion; that stretch reads MSISLLCCAAFPLLWAGPVNA. Positions 22-114 constitute an Ig-like domain; it reads GVTQTPKFRI…TSVYFCASSY (93 aa). Cysteines 42 and 110 form a disulfide. N84 carries an N-linked (GlcNAc...) asparagine glycan.

As to quaternary structure, alpha-beta TR is a heterodimer composed of an alpha and beta chain; disulfide-linked. The alpha-beta TR is associated with the transmembrane signaling CD3 coreceptor proteins to form the TR-CD3 (TcR or TCR). The assembly of alpha-beta TR heterodimers with CD3 occurs in the endoplasmic reticulum where a single alpha-beta TR heterodimer associates with one CD3D-CD3E heterodimer, one CD3G-CD3E heterodimer and one CD247 homodimer forming a stable octameric structure. CD3D-CD3E and CD3G-CD3E heterodimers preferentially associate with TR alpha and TR beta chains, respectively. The association of the CD247 homodimer is the last step of TcR assembly in the endoplasmic reticulum and is required for transport to the cell surface.

The protein localises to the cell membrane. V region of the variable domain of T cell receptor (TR) beta chain that participates in the antigen recognition. Alpha-beta T cell receptors are antigen specific receptors which are essential to the immune response and are present on the cell surface of T lymphocytes. Recognize peptide-major histocompatibility (MH) (pMH) complexes that are displayed by antigen presenting cells (APC), a prerequisite for efficient T cell adaptive immunity against pathogens. Binding of alpha-beta TR to pMH complex initiates TR-CD3 clustering on the cell surface and intracellular activation of LCK that phosphorylates the ITAM motifs of CD3G, CD3D, CD3E and CD247 enabling the recruitment of ZAP70. In turn ZAP70 phosphorylates LAT, which recruits numerous signaling molecules to form the LAT signalosome. The LAT signalosome propagates signal branching to three major signaling pathways, the calcium, the mitogen-activated protein kinase (MAPK) kinase and the nuclear factor NF-kappa-B (NF-kB) pathways, leading to the mobilization of transcription factors that are critical for gene expression and essential for T cell growth and differentiation. The T cell repertoire is generated in the thymus, by V-(D)-J rearrangement. This repertoire is then shaped by intrathymic selection events to generate a peripheral T cell pool of self-MH restricted, non-autoaggressive T cells. Post-thymic interaction of alpha-beta TR with the pMH complexes shapes TR structural and functional avidity. The polypeptide is T cell receptor beta variable 6-6 (Homo sapiens (Human)).